The primary structure comprises 211 residues: MKRTSAALVVFLILLFLGLLFLPMFIVYGGFGLLDPLATKERYTLSYYIYLESRKPFENVTVLIPAAKLGSLEIVPANFEIVKIGNRTYIKIAREKPYYEIYRLHGENETLTNYRMDITVEFPEIKIENLTEYRIDDGNVSVLLDYTNSSYVSLQVMLYYLELDYVDIFGKRIYTNFGHYNYLWCKTTPVNITEDKRGRWMKVPVSCGGEL.

A signal peptide spans 1–27; the sequence is MKRTSAALVVFLILLFLGLLFLPMFIV.

This is an uncharacterized protein from Archaeoglobus fulgidus (strain ATCC 49558 / DSM 4304 / JCM 9628 / NBRC 100126 / VC-16).